The primary structure comprises 41 residues: Antifungal peptide 2 (41 aa).

A Pyrrolidone carboxylic acid modification is found at Q1. Disulfide bonds link C3/C17, C7/C37, C11/C23, C16/C30, and C35/C39. A Chitin-binding type-1 domain is found at 4 to 41; it reads ASRCPRPCNAGLCCSIYGYCGSGAAYCGAGNCRCQCRG.

In terms of assembly, monomer.

In terms of biological role, has antifungal activity against P.infestans, A.lycopersici, V.dahliae, G.zeae, A.nicotianae, F.moniliforme, F.oxysporum and C.gossypii. This chain is Antifungal peptide 2, found in Eucommia ulmoides (Hardy rubber tree).